The primary structure comprises 637 residues: MGRLLEQISSSRDIRSLTFKQLNELAGEIRQVLINTVSKTGGHLAPNLGVVELTLGLHRVFHSPVDKIIWDVGHQSYVHKLITGRYKEFYTLRQFGGISGFPRPSESVHDAFGTGHSSTSISAALGMAIARDLKGEKYSVVAVIGDGAMTGGIAFEALNHAGHLKCNLIVVLNDNEMSIAQNVGAMSGYLTRLRTDPMYSRGKEEIEQLLRRIPIGSALLRLGERVKDSLKYLVVPGMIFEELGFTYLGPVDGHDLRAITTVLQHARARKGPVLVHVLTKKGKGYSPAESNPDRFHGIGAFDVATGEAVKKSNIPTYTEVFGRTMVKLAREFDNMLAITAAMTGGTGLTEFARLYPKRFFDVGIAEQHAVTLAAGMATGGFRPVVAIYSTFLQRAYDQILHDVCLQNLPVTFAIDRAGIVGEDGATHHGLFDFSYLRPIPNMVIMAPKDENELQHMLYTALSHPGPAAVRYPRSAGTGCRMDDSFKIIPLGRAEVLRDGTEVTLLAVGSMVCLAVKAAEILAGHGIDAAVINARFVKPLDKECILRYARRTREVFTLEENVLQGGFGSAVQELLSSCGERGVSVHCFGIPDSFVEHGNRALLLARYGLTVEQVVRAVLERFAQRRHPKKLKVVSEKA.

Residues histidine 74 and 115-117 (GHS) contribute to the thiamine diphosphate site. Aspartate 146 contacts Mg(2+). Thiamine diphosphate contacts are provided by residues 147-148 (GA), asparagine 175, tyrosine 285, and glutamate 366. Asparagine 175 lines the Mg(2+) pocket.

Belongs to the transketolase family. DXPS subfamily. In terms of assembly, homodimer. It depends on Mg(2+) as a cofactor. Thiamine diphosphate serves as cofactor.

The enzyme catalyses D-glyceraldehyde 3-phosphate + pyruvate + H(+) = 1-deoxy-D-xylulose 5-phosphate + CO2. It functions in the pathway metabolic intermediate biosynthesis; 1-deoxy-D-xylulose 5-phosphate biosynthesis; 1-deoxy-D-xylulose 5-phosphate from D-glyceraldehyde 3-phosphate and pyruvate: step 1/1. Functionally, catalyzes the acyloin condensation reaction between C atoms 2 and 3 of pyruvate and glyceraldehyde 3-phosphate to yield 1-deoxy-D-xylulose-5-phosphate (DXP). This is 1-deoxy-D-xylulose-5-phosphate synthase from Pelotomaculum thermopropionicum (strain DSM 13744 / JCM 10971 / SI).